We begin with the raw amino-acid sequence, 493 residues long: Serine/threonine-protein kinase 3 (493 aa).

The Protein kinase domain maps to 26–277; that stretch reads FDVLEKLGEG…ATQLLQHPFI (252 aa). Residues 32–40 and Lys55 contribute to the ATP site; that span reads LGEGSYGSV. Asp145 acts as the Proton acceptor in catalysis. A Phosphothreonine; by autocatalysis modification is found at Thr179. Residues 286-327 are a coiled coil; that stretch reads LRDLITEAMDIKAKRHEELQRELEEEDENSEEDELDSHTMVK. 2 disordered regions span residues 303-336 and 369-414; these read ELQR…AGTM and DDEE…NCNQ. Acidic residues predominate over residues 308–320; that stretch reads LEEEDENSEEDEL. Residues 325-336 show a composition bias toward polar residues; that stretch reads MVKTNSESAGTM. The span at 369–378 shows a compositional bias: acidic residues; it reads DDEEEEEEED. The span at 398 to 410 shows a compositional bias: basic and acidic residues; sequence YFDKQDSKNKPHD. The 48-residue stretch at 439 to 486 folds into the SARAH domain; sequence FDFLKNLSFEELQMRLKALDPMMEREIEDLRQRYNAKRQPILDAMDAK. Residues 444–477 adopt a coiled-coil conformation; that stretch reads NLSFEELQMRLKALDPMMEREIEDLRQRYNAKRQ.

The protein belongs to the protein kinase superfamily. STE Ser/Thr protein kinase family. STE20 subfamily. Homodimer; mediated via the coiled-coil region. The cofactor is Mg(2+).

The protein localises to the cytoplasm. It localises to the nucleus. The enzyme catalyses L-seryl-[protein] + ATP = O-phospho-L-seryl-[protein] + ADP + H(+). The catalysed reaction is L-threonyl-[protein] + ATP = O-phospho-L-threonyl-[protein] + ADP + H(+). Its activity is regulated as follows. Inhibited by the C-terminal non-catalytic region. Activated by caspase-cleavage. Full activation also requires homodimerization and autophosphorylation of Thr-179. Its function is as follows. Stress-activated, pro-apoptotic kinase which, following caspase-cleavage, enters the nucleus and induces chromatin condensation followed by internucleosomal DNA fragmentation. Key component of the Hippo signaling pathway which plays a pivotal role in organ size control and tumor suppression by restricting proliferation and promoting apoptosis. The core of this pathway is composed of a kinase cascade wherein stk3/mst2 and stk4/mst1, in complex with its regulatory protein sav1, phosphorylates and activates lats1/2 in complex with its regulatory protein mob1, which in turn phosphorylates and inactivates yap1 oncoprotein and wwtr1/taz. Phosphorylation of yap1 by lats2 inhibits its translocation into the nucleus to regulate cellular genes important for cell proliferation, cell death, and cell migration. In Xenopus laevis (African clawed frog), this protein is Serine/threonine-protein kinase 3 (stk3).